The sequence spans 889 residues: Putative receptor-like protein kinase At3g46340 (889 aa).

An N-terminal signal peptide occupies residues 1-25 (MEFPHSVLLVVLIIATFAISNLVQA). The Extracellular portion of the chain corresponds to 26 to 514 (EEDQEGFISL…VITKKKFPVM (489 aa)). N-linked (GlcNAc...) asparagine glycosylation is found at asparagine 185, asparagine 239, asparagine 259, asparagine 292, asparagine 316, asparagine 342, asparagine 366, asparagine 419, asparagine 435, asparagine 448, asparagine 467, and asparagine 474. LRR repeat units follow at residues 414–437 (RITSLNLSSTGLTGNIAAGIQNLT), 438–460 (HLDKLDLSNNNLTGGVPEFLASM), and 462–483 (SLSFINLSKNNLNGSIPQALLK). A helical transmembrane segment spans residues 515–535 (IVALVSSAVVVILVVLVLIFV). At 536–889 (FKKKKPSNLE…FDTKAVPSAR (354 aa)) the chain is on the cytoplasmic side. Residues 544 to 566 (LEDLPPSSNTPRENITSTSISDT) form a disordered region. Residues 585-874 (KNLQRPLGEG…TQGMDSHSSF (290 aa)) form the Protein kinase domain. ATP contacts are provided by residues 591 to 599 (LGEGGFGVV) and lysine 614. Phosphotyrosine is present on tyrosine 659. The Proton acceptor role is filled by aspartate 711. Serine 745 bears the Phosphoserine mark. Phosphothreonine is present on residues threonine 746 and threonine 751. Phosphotyrosine is present on tyrosine 759. The segment at 863-889 (NKTQGMDSHSSFEQSMSFDTKAVPSAR) is disordered. Polar residues predominate over residues 864 to 880 (KTQGMDSHSSFEQSMSF).

Belongs to the protein kinase superfamily. Ser/Thr protein kinase family.

It is found in the cell membrane. It catalyses the reaction L-seryl-[protein] + ATP = O-phospho-L-seryl-[protein] + ADP + H(+). It carries out the reaction L-threonyl-[protein] + ATP = O-phospho-L-threonyl-[protein] + ADP + H(+). The sequence is that of Putative receptor-like protein kinase At3g46340 from Arabidopsis thaliana (Mouse-ear cress).